A 309-amino-acid polypeptide reads, in one-letter code: Protein MAK16 homolog (309 aa).

The interval 194–309 (EADQFSEEEA…IEEETENQAN (116 aa)) is disordered. Composition is skewed to acidic residues over residues 195–227 (ADQF…DIED) and 235–270 (VEGD…DDEE). Over residues 275-293 (ITKKRGPTFKPTKKTPQKR) the composition is skewed to basic residues. Residues 299 to 309 (EIEEETENQAN) show a composition bias toward acidic residues.

It belongs to the MAK16 family.

The protein localises to the nucleus. It localises to the nucleolus. This is Protein MAK16 homolog (mak16l) from Dictyostelium discoideum (Social amoeba).